The sequence spans 367 residues: MVKIMAPITPTTSPQVKGLLSRFLTAPDRHPKLRYVYDISLIAISILCIVSIILWTQGSGLALFAIAPALAIGALGVTLLVSDLAESPKSKEVADTVAAVSLPFILTGTAAGLMFSAIAVGGGAVILANPLFLMGSMTLGFALMSLHKVTYQYLSNRSQWQKQNKIKQIESAAWENKLPKESKESSLQTSVRYSSLARKDKTRRNKPGMPNKGSQVPASIANTERSLRSEEVLHSQSLLRQKELFPNTSNIKKELPNTKSILHTPLNRRSPSGSDSDDVYYTPRAGLSSAETSALGDISGISSSSTSSKTSTPKAKRRVVRSSRSERNARHHRNKEDHRQNQEESSDDEDSSPLPSPRRKKYRSRPK.

The next 4 membrane-spanning stretches (helical) occupy residues 35–55 (YVYD…IILW), 61–81 (LALF…TLLV), 92–112 (EVAD…TAAG), and 113–133 (LMFS…PLFL). Disordered regions lie at residues 177–220 (KLPK…PASI), 249–283 (SNIK…YYTP), and 296–367 (GDIS…SRPK). The span at 257–274 (NTKSILHTPLNRRSPSGS) shows a compositional bias: polar residues. A compositionally biased stretch (low complexity) spans 302 to 312 (SSSSTSSKTST). The segment covering 323–342 (SRSERNARHHRNKEDHRQNQ) has biased composition (basic and acidic residues). Residues 357–367 (PRRKKYRSRPK) show a composition bias toward basic residues.

This sequence belongs to the chlamydial CPn_0443/CT_005/TC_0273 family.

The protein localises to the cell membrane. This is an uncharacterized protein from Chlamydia muridarum (strain MoPn / Nigg).